The chain runs to 163 residues: NADH-quinone oxidoreductase subunit I (163 aa).

4Fe-4S ferredoxin-type domains are found at residues 53-83 and 94-123; these read LRRY…IEAG and VRYD…EGPN. 8 residues coordinate [4Fe-4S] cluster: Cys63, Cys66, Cys69, Cys73, Cys103, Cys106, Cys109, and Cys113.

This sequence belongs to the complex I 23 kDa subunit family. NDH-1 is composed of 14 different subunits. Subunits NuoA, H, J, K, L, M, N constitute the membrane sector of the complex. It depends on [4Fe-4S] cluster as a cofactor.

It localises to the cell inner membrane. It catalyses the reaction a quinone + NADH + 5 H(+)(in) = a quinol + NAD(+) + 4 H(+)(out). Functionally, NDH-1 shuttles electrons from NADH, via FMN and iron-sulfur (Fe-S) centers, to quinones in the respiratory chain. The immediate electron acceptor for the enzyme in this species is believed to be ubiquinone. Couples the redox reaction to proton translocation (for every two electrons transferred, four hydrogen ions are translocated across the cytoplasmic membrane), and thus conserves the redox energy in a proton gradient. In Rhizobium johnstonii (strain DSM 114642 / LMG 32736 / 3841) (Rhizobium leguminosarum bv. viciae), this protein is NADH-quinone oxidoreductase subunit I.